Reading from the N-terminus, the 963-residue chain is MAARNLEKMASIDAQLRLLAPGKVSEDDKLIEYDALLLDRFLDILQDLHGEDVREFVQECYEVAADYDGNRNTEKLEELGNMLTSLDPGDSIVVTKSFSNMLSLANLAEEVQIAYRRRIKKLKKGDFADEASATTESDIEETLKRLLQLNKTPEEVFDALKNQTVDLVLTAHPTQSVRRSLLQKFGRIRDCLTQLYAKDITPDDKQELDEALQREIQAAFRTDEIRRTPPTPQDEMRAGMSYFHETIWKGVPKFLRRVDTALKNIGINERVPYNAPLIQFSSWMGGDRDGNPRVTPEVTRDVCLLARMMAANLYFSQIEDLMFEMSMWRCNEELRVRAERQRCAKRDAKHYIEFWKQIPANEPYRAILGDVRDKLYNTRERARQLLSSGVSDVPEDAVFTSVDQFLEPLELCYRSLCDCGDRPIADGSLLDFLRQVSTFGLALVKLDIRQESERHSDVLDAITTHLGIGSYKEWSEDKRQEWLLSELSGKRPLFGPDLPKTEEVADVLDTFKVISELPSDSFGAYIISMATAPSDVLAVELLQRECGITDPLRVVPLFEKLADLESAPAAVARLFSIEWYRNRINGKQEVMIGYSDSGKDAGRLSAAWQLYKTQEELVKVAKEYGVKLTMFHGRGGTVGRGGGPTHLAILSQPPDTIHGQLRVTVQGEVIEQSFGEEHLCFRTLQRFTAATLEHGMHPPVSPKPEWRVLMDEMAIIATEEYRSVVFKEPRFVEYFRLATPELEYGRMNIGSRPSKRKPSGGIESLRAIPWIFAWTQTRFHLPVWLGFGGAFKRVIQKDSKNLNMLKEMYNQWPFFRVTIDLVEMVFAKGDPGIAALYDRLLVSEELQPFGEQLRVNYQETRRLLLQVAGHKDILEGDPYLRQRLQLRDPYITTLNVCQAYTLKQIRDPSFHVKVRPHLSKDYMESSPAAELVKLNPKSEYAPGLEDTVILTMKGIAAGMQNTG.

At Ser11 the chain carries Phosphoserine. Residues His172 and Lys599 contribute to the active site. Position 701 is a phosphoserine (Ser701).

This sequence belongs to the PEPCase type 1 family. As to quaternary structure, homotetramer. Mg(2+) is required as a cofactor. In terms of tissue distribution, expressed in all plant organs, with higher levels in stems and leaves.

Its subcellular location is the cytoplasm. It carries out the reaction oxaloacetate + phosphate = phosphoenolpyruvate + hydrogencarbonate. By light-reversible phosphorylation. Functionally, through the carboxylation of phosphoenolpyruvate (PEP) it forms oxaloacetate, a four-carbon dicarboxylic acid source for the tricarboxylic acid cycle. This is Phosphoenolpyruvate carboxylase 2 (PPC2) from Arabidopsis thaliana (Mouse-ear cress).